The following is a 732-amino-acid chain: TIR domain-containing adapter molecule 1 (732 aa).

Residues Met-1–Ser-153 are TRIF-NTD. Residues Glu-84 to Asp-91 carry the TRAF6-binding motif. The interval Cys-144–His-191 is disordered. Polar residues predominate over residues His-159–Gln-178. Positions Leu-206–Ser-209 match the pLxIS motif motif. Position 209 is a phosphoserine (Ser-209). A Glycyl lysine isopeptide (Lys-Gly) (interchain with G-Cter in ubiquitin) cross-link involves residue Lys-228. 2 consecutive short sequence motifs (TRAF6-binding) follow at residues Gln-247 to Trp-254 and His-296 to Thr-306. A compositionally biased stretch (polar residues) spans Ser-305–Pro-331. The segment at Ser-305–Ser-389 is disordered. Residues Ser-345–Pro-359 show a composition bias toward low complexity. Residues Lys-395–Lys-534 enclose the TIR domain. The sufficient to induce apoptosis stretch occupies residues Trp-514–Glu-713. 2 disordered regions span residues Thr-603 to Pro-679 and Met-696 to Glu-732. Pro residues-rich tracts occupy residues Pro-604–Ser-615 and Pro-625–Ser-657. Over residues Ser-658–Ala-671 the composition is skewed to low complexity.

Homodimer. Found in a multi-helicase-TICAM1 complex at least composed of DHX36, DDX1, DDX21 and TICAM1; this complex exists in resting cells with or without poly(I:C) RNA ligand stimulation. Interacts (via TIR domain) with DDX21 (via C-terminus). Interacts (via TIR domain) with DHX36 (via C-terminus). Interacts with AZI2 and IRF7. Interacts (when phosphorylated) with IRF3; following activation and phosphorylation on the pLxIS motif by TBK1, recruits IRF3. Interacts with TICAM2 in TLR4 recruitment. Interaction with PIAS4 inhibits the TICAM1-induced NF-kappa-B, IRF and IFNB1 activation. Interacts with IKBKB and IKBKE. Interaction with SARM1 blocks TICAM1-dependent transcription factor activation. Interacts with TRAF3. Interacts with TRAFD1. Interacts with UBQLN1 (via UBA domain). Interacts with TBK1, TRAF6 and RIPK1 and these interactions are enhanced in the presence of WDFY1. Interacts (via the TIR domain) with TLR3 in response to poly(I:C) and this interaction is enhanced in the presence of WDFY1. Interacts with TLR4 in response to poly(I:C) in a WDFY1-dependent manner. Interacts with WDFY1 in response to poly(I:C). Interacts with TRIM56. Interacts (via the TIR domain) with TLR5. Interacts with TRIM8. Interacts with TAX1BP1 and TRIM32; these interactions target TICAM1 to TAX1BP1-mediated selective autophagic degradation. Interacts with DDX50. In terms of processing, phosphorylated by TBK1. Following activation, phosphorylated by TBK1 at Ser-209 in the pLxIS motif. The phosphorylated pLxIS motif constitutes an IRF3-binding motif, leading to recruitment of the transcription factor IRF3 to induce type-I interferons and other cytokines. Post-translationally, polyubiquitinated at Lys-228 by TRIM38 with 'Lys-48'-linked chains, leading to proteasomal degradation. Polyubiquitinated with 'Lys-6'- and 'Lys-33'-linked chains in a TRIM8-dependent manner; ubiquitination disrupts the interaction with TBK1 and subsequent interferon production.

The protein localises to the cytoplasm. Its subcellular location is the cytosol. It localises to the cytoplasmic vesicle. It is found in the autophagosome. The protein resides in the mitochondrion. In terms of biological role, involved in innate immunity against invading pathogens. Adapter used by TLR3, TLR4 (through TICAM2) and TLR5 to mediate NF-kappa-B and interferon-regulatory factor (IRF) activation, and to induce apoptosis. Ligand binding to these receptors results in TRIF recruitment through its TIR domain. Distinct protein-interaction motifs allow recruitment of the effector proteins TBK1, TRAF6 and RIPK1, which in turn, lead to the activation of transcription factors IRF3 and IRF7, NF-kappa-B and FADD respectively. Phosphorylation by TBK1 on the pLxIS motif leads to recruitment and subsequent activation of the transcription factor IRF3 to induce expression of type I interferon and exert a potent immunity against invading pathogens. Component of a multi-helicase-TICAM1 complex that acts as a cytoplasmic sensor of viral double-stranded RNA (dsRNA) and plays a role in the activation of a cascade of antiviral responses including the induction of pro-inflammatory cytokines. The protein is TIR domain-containing adapter molecule 1 (Ticam1) of Mus musculus (Mouse).